The chain runs to 120 residues: MKLLYFFVVITVLVAVAAALPAKTEEQIAAEENQLVEDLVQYAGTRLTRKRATRCSKKLGEKCNYHCECCGATVACSTVYVGGKETNFCSDKTSNNGALNTVGQGLNVVSNGLSAFQCWG.

The signal sequence occupies residues 1–19 (MKLLYFFVVITVLVAVAAA). Residues 20–51 (LPAKTEEQIAAEENQLVEDLVQYAGTRLTRKR) constitute a propeptide that is removed on maturation.

This sequence belongs to the neurotoxin 25 family. F7 subfamily. In terms of processing, contains 4 disulfide bonds. Expressed by the venom gland.

It localises to the secreted. Its function is as follows. Weak insecticidal toxin with probable ion channel impairing activity. In vivo, induces paralysis when injected into sheep blowflies (L.cuprina). Shows weak toxicity, since it is only toxic at high doses, and flies recover within 24 hours. This is U3-hexatoxin-Hi1a from Hadronyche infensa (Fraser island funnel-web spider).